Consider the following 551-residue polypeptide: Adenine deaminase (551 aa).

Belongs to the metallo-dependent hydrolases superfamily. Adenine deaminase family. Requires Mn(2+) as cofactor.

The catalysed reaction is adenine + H2O + H(+) = hypoxanthine + NH4(+). This Methanosarcina barkeri (strain Fusaro / DSM 804) protein is Adenine deaminase.